The primary structure comprises 544 residues: Lariat debranching enzyme (544 aa).

Positions 8, 10, 39, and 84 each coordinate a divalent metal cation. The tract at residues 124 to 154 (SGIFKSHDYRKGHFECPPYNSSTIRSIYHVR) is lariat recognition loop. N6-acetyllysine is present on lysine 128. Histidine 174, histidine 226, and histidine 228 together coordinate a divalent metal cation. Residues 395 to 412 (EYEEQDDVESNDSGEDQS) are compositionally biased toward acidic residues. The tract at residues 395 to 463 (EYEEQDDVES…PSDQASEFSA (69 aa)) is disordered. A compositionally biased stretch (polar residues) spans 413 to 425 (EYNTDTSALSSIN). Residues 429-439 (IMLDEEEDEDS) show a composition bias toward acidic residues. Residues 445–463 (SGMNTPSVEPSDQASEFSA) show a composition bias toward polar residues. 7 positions are modified to phosphoserine: serine 464, serine 474, serine 478, serine 479, serine 485, serine 499, and serine 514. The segment at 476-544 (IVSSDDTVDS…AVDDDDDDAA (69 aa)) is disordered. Residues 512 to 522 (RLSDEHEPEQR) are compositionally biased toward basic and acidic residues.

Belongs to the lariat debranching enzyme family. Fe(2+) serves as cofactor. Zn(2+) is required as a cofactor. It depends on Mn(2+) as a cofactor. In terms of tissue distribution, ubiquitously expressed, strongest expression in the spinal cord and brainstem.

The protein localises to the nucleus. Its activity is regulated as follows. Active in presence of diverse metals including Fe(2+), Zn(2+), Mn(2+). Also activated by Ca(2+). Binds two metal cations in two adjacent alpha and beta metal-binding pockets. In terms of biological role, cleaves the 2'-5' phosphodiester linkage at the branch point of excised lariat intron RNA and converts them into linear molecules that can be subsequently degraded, thereby facilitating ribonucleotide turnover. Linked to its role in pre-mRNA processing mechanism, may also participate in retrovirus replication via an RNA lariat intermediate in cDNA synthesis and have an antiviral cell-intrinsic defense function in the brainstem. In Homo sapiens (Human), this protein is Lariat debranching enzyme (DBR1).